The chain runs to 701 residues: MFNKFSKTFQYGRHTVKLETGEIARQASGSVLVSMDDTVVLVAVTVNKDVKPGQDFFPLTVDYYERTYAAGKIPGGFFKREGKQSEKEILTCRLIDRPIRPLFPAGFYHDVQVVATVMSLNPEVDADIPAMIGASAAMVLAGVPFMGPIGAARVGYANGEYILNPTKTELTTSQLDLVVAGTESAVLMVESEAQQLPEAVMLGAVVYGHEQMQAAIKAINELADEVNPVIFEWAPAAEDTELVAQVKALAEADVAAAFKIRQKQARSQALGEAWSKVKAALITEETETLRANHIKSLFKELEANVVRGQILAGEPRIDGRDTRTVRPIAIRTGVLPRAHGSVLFTRGETQALVSTTLGTKQDEQIIDALAGEYTDRFMLHYNFPPYSTGETGRMGPPKRREIGHGRLAKRALIAVLPKQEDFSYSMRVVSEITESNGSSSMASVCGGCLSLMNAGVPLSAHVAGIAMGLILEDNRFAVLTDILGDEDHLGDMDFKVAGTENGVTALQMDIKIQGITKEIMQVALDQAKEGRLHILGIMKSAIDAPQELSTHAPRLYTLRINPDKIRDVIGKGGSVIRALTEETGTSIDIAEDGLITIASVSAEGAEEAKRRIEEITAEVEIGKIYEGTVVKILDKNVGAIVQIMPGRDGLVHISQIANERIANVADHLQEGQQVRVKVLETDERGRIRLSIKAALADAPQV.

Mg(2+) contacts are provided by Asp487 and Asp493. In terms of domain architecture, KH spans 553-612 (PRLYTLRINPDKIRDVIGKGGSVIRALTEETGTSIDIAEDGLITIASVSAEGAEEAKRRI). The S1 motif domain occupies 622-692 (GKIYEGTVVK…ERGRIRLSIK (71 aa)).

This sequence belongs to the polyribonucleotide nucleotidyltransferase family. The cofactor is Mg(2+).

The protein localises to the cytoplasm. It catalyses the reaction RNA(n+1) + phosphate = RNA(n) + a ribonucleoside 5'-diphosphate. In terms of biological role, involved in mRNA degradation. Catalyzes the phosphorolysis of single-stranded polyribonucleotides processively in the 3'- to 5'-direction. The sequence is that of Polyribonucleotide nucleotidyltransferase from Laribacter hongkongensis (strain HLHK9).